The sequence spans 50 residues: MDFVIQWSCYLLAFLGGSAVAWVVVTLSIKRASRDEGAAEAPSAAETGAQ.

The helical transmembrane segment at Cys9–Ile29 threads the bilayer.

This sequence belongs to the ArfB membrane protein family.

It is found in the cell membrane. In terms of biological role, required for wild-type expression of ArfA and ammonia secretion. This is an uncharacterized protein from Mycobacterium bovis (strain ATCC BAA-935 / AF2122/97).